The sequence spans 492 residues: Probable cytochrome P450 313a3 (492 aa).

C438 is a binding site for heme.

It belongs to the cytochrome P450 family. Requires heme as cofactor.

The protein localises to the endoplasmic reticulum membrane. The protein resides in the microsome membrane. Functionally, may be involved in the metabolism of insect hormones and in the breakdown of synthetic insecticides. The chain is Probable cytochrome P450 313a3 (Cyp313a3) from Drosophila melanogaster (Fruit fly).